A 558-amino-acid chain; its full sequence is Adenine deaminase (558 aa).

The protein belongs to the metallo-dependent hydrolases superfamily. Adenine deaminase family. Requires Mn(2+) as cofactor.

The catalysed reaction is adenine + H2O + H(+) = hypoxanthine + NH4(+). This chain is Adenine deaminase, found in Deinococcus deserti (strain DSM 17065 / CIP 109153 / LMG 22923 / VCD115).